We begin with the raw amino-acid sequence, 839 residues long: MEKWASLDSDESEPPAQENSCPDPPDRDPNSKPPPAKPHIFATRSRTRLFGKGDSEEASPMDCPYEEGGLASCPIITVSSVVTLQRSVDGPTCLRQTSQDSVSTGVETPPRLYDRRSIFDAVAQSNCQELESLLSFLQKSKKRLTDSEFKDPETGKTCLLKAMLNLHNGQNDTIALLLDIARKTDSLKQFVNASYTDSYYKGQTALHIAIERRNMALVTLLVENGADVQAAANGDFFKKTKGRPGFYFGELPLSLAACTNQLAIVKFLLQNSWQPADISARDSVGNTVLHALVEVADNTADNTKFVTNMYNEILILGAKLHPTLKLEELTNKKGLTPLALAASSGKIGVLAYILQREIHEPECRHLSRKFTEWAYGPVHSSLYDLSCIDTCEKNSVLEVIAYSSSETPNRHDMLLVEPLNRLLQDKWDRFVKRIFYFNFFVYCLYMIIFTTAAYYRPVEGLPPYKLNNTVGDYFRVTGEILSVSGGVYFFFRGIQYFLQRRPSLKSLFVDSYSEILFFVQSLFMLVSVVLYFSHRKEYVASMVFSLAMGWTNMLYYTRGFQQMGIYAVMIEKMILRDLCRFMFVYLVFLFGFSTAVVTLIEDGKNNSLPVESPPHKCRGSACRPGNSYNSLYSTCLELFKFTIGMGDLEFTENYDFKAVFIILLLAYVILTYILLLNMLIALMGETVNKIAQESKNIWKLQRAITILDTEKSFLKCMRKAFRSGKLLQVGFTPDGKDDFRWCFRVDEVNWTTWNTNVGIINEDPGNCEGVKRTLSFSLRSGRVSGRNWKNFALVPLLRDASTRDRHSTQPEEVQLKHYTGSLKPEDAEVFKDSMAPGEK.

Residues 1–60 (MEKWASLDSDESEPPAQENSCPDPPDRDPNSKPPPAKPHIFATRSRTRLFGKGDSEEASP) form a disordered region. Over 1–433 (MEKWASLDSD…QDKWDRFVKR (433 aa)) the chain is Cytoplasmic. The ANK 1 repeat unit spans residues 111–139 (RLYDRRSIFDAVAQSNCQELESLLSFLQK). Arg116 is an ATP binding site. Phosphoserine; by PKA and PKD is present on Ser117. Thr145 is subject to Phosphothreonine; by PKA; in vitro. An ANK 2 repeat occupies 154–186 (TGKTCLLKAMLNLHNGQNDTIALLLDIARKTDS). ATP is bound by residues Lys156, Lys161, Asn165, 200–203 (YKGQ), and 211–212 (ER). 4 ANK repeats span residues 204-229 (TALHIAIERRNMALVTLLVENGADVQ), 250-277 (ELPLSLAACTNQLAIVKFLLQNSWQPAD), 286-322 (NTVLHALVEVADNTADNTKFVTNMYNEILILGAKLHP), and 336-359 (TPLALAASSGKIGVLAYILQREIH). Thr371 is modified (phosphothreonine; by PKA; in vitro). One copy of the ANK 7 repeat lies at 394 to 416 (NSVLEVIAYSSSETPNRHDMLLV). A helical transmembrane segment spans residues 434–455 (IFYFNFFVYCLYMIIFTTAAYY). The Extracellular segment spans residues 456-472 (RPVEGLPPYKLNNTVGD). A helical membrane pass occupies residues 473 to 497 (YFRVTGEILSVSGGVYFFFRGIQYF). The Cytoplasmic portion of the chain corresponds to 498–510 (LQRRPSLKSLFVD). Ser503 carries the phosphoserine; by PKC/PRKCE modification. Residues 511–532 (SYSEILFFVQSLFMLVSVVLYF) form a helical membrane-spanning segment. 512-513 (YS) lines the resiniferatoxin pocket. Residues 533-535 (SHR) are Extracellular-facing. The chain crosses the membrane as a helical span at residues 536-556 (KEYVASMVFSLAMGWTNMLYY). Residues Thr551 and Arg558 each contribute to the resiniferatoxin site. Over 557–559 (TRG) the chain is Cytoplasmic. Residues 560 to 598 (FQQMGIYAVMIEKMILRDLCRFMFVYLVFLFGFSTAVVT) traverse the membrane as a helical segment. Residues 599–630 (LIEDGKNNSLPVESPPHKCRGSACRPGNSYNS) are Extracellular-facing. N-linked (GlcNAc...) asparagine glycosylation occurs at Asn605. Positions 631–652 (LYSTCLELFKFTIGMGDLEFTE) form an intramembrane region, pore-forming. Gly644 provides a ligand contact to Na(+). The Selectivity filter motif lies at 644–647 (GMGD). A Ca(2+)-binding site is contributed by Asp647. Residues 653 to 656 (NYDF) lie on the Extracellular side of the membrane. A helical transmembrane segment spans residues 657–683 (KAVFIILLLAYVILTYILLLNMLIALM). Over 684 to 839 (GETVNKIAQE…FKDSMAPGEK (156 aa)) the chain is Cytoplasmic. Residues 685-713 (ETVNKIAQESKNIWKLQRAITILDTEKSF) form an AD region. Thr705 carries the phosphothreonine modification. An interaction with calmodulin region spans residues 768-802 (EGVKRTLSFSLRSGRVSGRNWKNFALVPLLRDAST). Ser775 carries the phosphoserine modification. The segment at 778–793 (LRSGRVSGRNWKNFAL) is required for PIP2-mediated channel inhibition. Ser801 is modified (phosphoserine; by PKC/PRKCE and PKC/PRKCZ). Positions 802–815 (TRDRHSTQPEEVQL) are enriched in basic and acidic residues. The disordered stretch occupies residues 802 to 839 (TRDRHSTQPEEVQLKHYTGSLKPEDAEVFKDSMAPGEK). A Phosphoserine modification is found at Ser821. Positions 823 to 839 (KPEDAEVFKDSMAPGEK) are enriched in basic and acidic residues.

Belongs to the transient receptor (TC 1.A.4) family. TrpV subfamily. TRPV1 sub-subfamily. Homotetramer. May also form a heteromeric channel with TRPV3. Interacts with CALM, PRKCM and CSK. Interacts with PRKCG and NTRK1, probably by forming a trimeric complex. Interacts with PIRT. Interacts with the Scolopendra mutilans RhTx toxin. Interacts with TMEM100. Interacts with PACS2. Phosphorylation by PKA reverses capsaicin-induced dephosphorylation at multiple sites probably including Ser-117 as a major phosphorylation site. Phosphorylation by CAMKII seems to regulate binding to vanilloids. Phosphorylated and modulated by PRKCE, PRKCM and probably PRKCZ. Dephosphorylation by calcineurin seems to lead to receptor desensitization and phosphorylation by CAMKII recovers activity. Detected in neurons in the root ganglia (at protein level). Detected in dorsal root ganglia.

The protein resides in the postsynaptic cell membrane. It localises to the cell projection. It is found in the dendritic spine membrane. Its subcellular location is the cell membrane. It carries out the reaction Ca(2+)(in) = Ca(2+)(out). The catalysed reaction is Mg(2+)(in) = Mg(2+)(out). It catalyses the reaction Na(+)(in) = Na(+)(out). The enzyme catalyses K(+)(in) = K(+)(out). With respect to regulation, the channel is sensitized by ATP binding. Repeated stimulation with capsaicin gives rise to progressively smaller responses, due to desensitization. This desensitization is triggered by the influx of calcium ions and is inhibited by elevated ATP levels. Ca(2+) and CALM displace ATP from its binding site and trigger a conformation change that leads to a closed, desensitized channel. The double-knot toxin (DkTx) from the Chinese earth tiger tarantula activates the channel and traps it in an open conformation. The Scolopendra mutilans RhTx toxin potentiates the heat activation pathway mediated by this channel by binding to the charge-rich outer pore region (in an activated state). Channel activity is activated via the interaction with PIRT and phosphatidylinositol 4,5-bisphosphate (PIP2). Both PIRT and PIP2 are required to activate channel activity. Intracellular PIP2 inhibits desensitization. Its function is as follows. Non-selective calcium permeant cation channel involved in detection of noxious chemical and thermal stimuli. Seems to mediate proton influx and may be involved in intracellular acidosis in nociceptive neurons. Involved in mediation of inflammatory pain and hyperalgesia. Sensitized by a phosphatidylinositol second messenger system activated by receptor tyrosine kinases, which involves PKC isozymes and PCL. Activation by vanilloids, like capsaicin, and temperatures higher than 42 degrees Celsius. Upon activation, exhibits a time- and Ca(2+)-dependent outward rectification, followed by a long-lasting refractory state. Mild extracellular acidic pH (6.5) potentiates channel activation by noxious heat and vanilloids, whereas acidic conditions (pH &lt;6) directly activate the channel. Can be activated by endogenous compounds, including 12-hydroperoxytetraenoic acid and bradykinin. Acts as ionotropic endocannabinoid receptor with central neuromodulatory effects. Triggers a form of long-term depression (TRPV1-LTD) mediated by the endocannabinoid anandamine in the hippocampus and nucleus accumbens by affecting AMPA receptors endocytosis. The polypeptide is Transient receptor potential cation channel subfamily V member 1 (Trpv1) (Mus musculus (Mouse)).